A 725-amino-acid chain; its full sequence is Polyribonucleotide nucleotidyltransferase (725 aa).

Residues Asp487 and Asp493 each contribute to the Mg(2+) site. The 60-residue stretch at 554-613 folds into the KH domain; that stretch reads PRIETMQIPTDKIREVIGTGGKVIREIVEKTGAKIDIQDTGVVKIASSDGKAIKAAYNWI. The S1 motif domain maps to 623 to 691; that stretch reads GMIYDGTVVK…ERGKIRLSMK (69 aa). A disordered region spans residues 699-725; sequence EDLTEKLKAEREADRNRERQARQSAGE. Residues 701-719 are compositionally biased toward basic and acidic residues; that stretch reads LTEKLKAEREADRNRERQA.

Belongs to the polyribonucleotide nucleotidyltransferase family. Requires Mg(2+) as cofactor.

It localises to the cytoplasm. It catalyses the reaction RNA(n+1) + phosphate = RNA(n) + a ribonucleoside 5'-diphosphate. Involved in mRNA degradation. Catalyzes the phosphorolysis of single-stranded polyribonucleotides processively in the 3'- to 5'-direction. The polypeptide is Polyribonucleotide nucleotidyltransferase (Methylobacterium sp. (strain 4-46)).